We begin with the raw amino-acid sequence, 245 residues long: Eukaryotic translation initiation factor 3 subunit K (245 aa).

Residues 46 to 227 form the PCI domain; sequence YDCYANLALL…EAKGTVVREN (182 aa).

This sequence belongs to the eIF-3 subunit K family. In terms of assembly, component of the eukaryotic translation initiation factor 3 (eIF-3) complex.

It localises to the cytoplasm. Its function is as follows. Component of the eukaryotic translation initiation factor 3 (eIF-3) complex, which is involved in protein synthesis of a specialized repertoire of mRNAs and, together with other initiation factors, stimulates binding of mRNA and methionyl-tRNAi to the 40S ribosome. The eIF-3 complex specifically targets and initiates translation of a subset of mRNAs involved in cell proliferation. This chain is Eukaryotic translation initiation factor 3 subunit K, found in Phaeosphaeria nodorum (strain SN15 / ATCC MYA-4574 / FGSC 10173) (Glume blotch fungus).